The chain runs to 490 residues: GTPase Der (490 aa).

EngA-type G domains are found at residues 3–166 (PVVA…MEDL) and 203–376 (IKLA…DSST). GTP contacts are provided by residues 9-16 (GRPNVGKS), 56-60 (DTGGI), 118-121 (NKTD), 209-216 (GRPNVGKS), 256-260 (DTAGV), and 321-324 (NKWD). Residues 377–461 (RRVGTSMLTR…PIRIQFKEGE (85 aa)) form the KH-like domain.

Belongs to the TRAFAC class TrmE-Era-EngA-EngB-Septin-like GTPase superfamily. EngA (Der) GTPase family. In terms of assembly, associates with the 50S ribosomal subunit.

In terms of biological role, GTPase that plays an essential role in the late steps of ribosome biogenesis. This is GTPase Der from Escherichia fergusonii (strain ATCC 35469 / DSM 13698 / CCUG 18766 / IAM 14443 / JCM 21226 / LMG 7866 / NBRC 102419 / NCTC 12128 / CDC 0568-73).